Reading from the N-terminus, the 484-residue chain is Aldehyde dehydrogenase family 3 member A2 (484 aa).

The Cytoplasmic portion of the chain corresponds to 1–463; the sequence is MERQVQRLRQ…FLLKQFNKGR (463 aa). 185–190 lines the NAD(+) pocket; that stretch reads GNTAVG. Active-site residues include Glu207 and Cys241. Ser293 is modified (phosphoserine). The chain crosses the membrane as a helical span at residues 464 to 484; sequence LQLLLLVCLVAVAAVIVKDQL. The short motif at 481 to 484 is the Prevents secretion from ER element; it reads KDQL.

The protein belongs to the aldehyde dehydrogenase family. In terms of assembly, homodimer. Post-translationally, the N-terminus is blocked.

The protein resides in the microsome membrane. It localises to the endoplasmic reticulum membrane. The catalysed reaction is an aldehyde + NAD(+) + H2O = a carboxylate + NADH + 2 H(+). It catalyses the reaction a fatty aldehyde + NAD(+) + H2O = a fatty acid + NADH + 2 H(+). It carries out the reaction (2E)-hexadecenal + NAD(+) + H2O = (E)-hexadec-2-enoate + NADH + 2 H(+). The enzyme catalyses hexadecanoate + NADH + 2 H(+) = hexadecanal + NAD(+) + H2O. The catalysed reaction is 22-oxodocosanoate + NAD(+) + H2O = docosanedioate + NADH + 2 H(+). It catalyses the reaction 2,6,10,14-tetramethylpentadecanal + NAD(+) + H2O = 2,6,10,14-tetramethylpentadecanoate + NADH + 2 H(+). It carries out the reaction octadecanal + NAD(+) + H2O = octadecanoate + NADH + 2 H(+). The enzyme catalyses dodecanoate + NADH + 2 H(+) = dodecanal + NAD(+) + H2O. The catalysed reaction is decanal + NAD(+) + H2O = decanoate + NADH + 2 H(+). It catalyses the reaction tetradecanal + NAD(+) + H2O = tetradecanoate + NADH + 2 H(+). It carries out the reaction octanal + NAD(+) + H2O = octanoate + NADH + 2 H(+). The enzyme catalyses heptanal + NAD(+) + H2O = heptanoate + NADH + 2 H(+). The catalysed reaction is (2E,6E)-farnesal + NAD(+) + H2O = (2E,6E)-farnesoate + NADH + 2 H(+). Catalyzes the oxidation of medium and long-chain aliphatic aldehydes to fatty acids. Active on a variety of saturated and unsaturated aliphatic aldehydes between 6 and 24 carbons in length. Responsible for conversion of the sphingosine 1-phosphate (S1P) degradation product hexadecenal to hexadecenoic acid. This is Aldehyde dehydrogenase family 3 member A2 (Aldh3a2) from Rattus norvegicus (Rat).